The sequence spans 728 residues: NF-kappa-B inhibitor zeta (728 aa).

Residues 45-107 are disordered; the sequence is GAGDTGYLSA…PHMGVGRQQR (63 aa). The span at 53–82 shows a compositional bias: low complexity; the sequence is SAVPSAPGSPGSDSSDFSSTSSVSSCGAVE. The segment covering 83–96 has biased composition (basic and acidic residues); it reads SRPRGGARAERPQV. Positions 107–129 constitute an OCA domain; that stretch reads RGPFQGVRVKNSVKELLLHIRSN. Residues 163–178 carry the Nuclear localization signal motif; the sequence is KRKGPDPLSDGPVCKR. Polar residues-rich tracts occupy residues 241–250 and 268–288; these read PTVPQNSPRD and QPFQVSGSPQMMDQASMYQYS. The interval 241–334 is disordered; it reads PTVPQNSPRD…SQSPKYDSNL (94 aa). The segment covering 303-315 has biased composition (low complexity); it reads QQQHQQNYPHNSP. The segment covering 316-330 has biased composition (polar residues); it reads LQFSPYSRMSQSPKY. The segment at 329-403 is required for transcriptional activity; it reads KYDSNLFDTH…VGVHDVGSHS (75 aa). The interval 414–728 is interaction with NFKB1/p50; it reads MGSPMNTTQL…KSIQQRAPPY (315 aa). ANK repeat units follow at residues 453–482, 489–518, 522–551, 561–589, 591–617, 622–651, and 658–691; these read DGDTFLHIAVAQGRRALSYVLARKMNALHM, NGQSAFQVAVAANQHLIVQDLVNLGAQVNT, WGRTPLHVCAEKGHSQVLQAIQKGAVRSNQ, DGLTPLHCAVVAHNAVVHELQRNRQSHSP, VQDLLLRNKSLVDTIKCLIQMGAAVEA, SGRTALHLAAEEANLELIRLFLELPSCLSF, and NGNTALHVAASLQYRVTQLDAVRLLMRKGADPST.

In terms of assembly, interacts with NFKB1/p50. Interacts with RELA. Interacts with AKIRIN2. As to expression, expressed in kidney, liver, lung and heart. Expressed at very low levels in skeletal muscle, spleen and brain.

It localises to the nucleus. In terms of biological role, involved in regulation of NF-kappa-B transcription factor complexes. Inhibits NF-kappa-B activity without affecting its nuclear translocation upon stimulation. Inhibits DNA-binding of RELA and NFKB1/p50, and of the NF-kappa-B p65-p50 heterodimer and the NF-kappa-B p50-p50 homodimer. Also seems to activate NF-kappa-B-mediated transcription. In vitro, upon association with NFKB1/p50 has transcriptional activation activity and, together with NFKB1/p50 and RELA, is recruited to LCN2 promoters. Promotes transcription of LCN2 and DEFB4. Is recruited to IL-6 promoters and activates IL-6 but decreases TNF-alpha production in response to LPS. Seems to be involved in the induction of inflammatory genes activated through TLR/IL-1 receptor signaling. Involved in the induction of T helper 17 cells (Th17) differentiation upon recognition of antigen by T cell antigen receptor (TCR). This chain is NF-kappa-B inhibitor zeta (Nfkbiz), found in Mus musculus (Mouse).